A 310-amino-acid chain; its full sequence is 2-dehydro-3-deoxygluconokinase (310 aa).

Residues 29–33 (GDTLN), Y89, 103–105 (YWR), and R171 contribute to the substrate site. Residues 169–171 (NYR), 229–234 (KRGADA), and 262–265 (AAGD) each bind ATP. D265 provides a ligand contact to substrate. D265 serves as the catalytic Proton acceptor.

It belongs to the carbohydrate kinase PfkB family.

It carries out the reaction 2-dehydro-3-deoxy-D-gluconate + ATP = 2-dehydro-3-deoxy-6-phospho-D-gluconate + ADP + H(+). Its pathway is carbohydrate acid metabolism; 2-dehydro-3-deoxy-D-gluconate degradation; D-glyceraldehyde 3-phosphate and pyruvate from 2-dehydro-3-deoxy-D-gluconate: step 1/2. In terms of biological role, catalyzes the phosphorylation of 2-keto-3-deoxygluconate (KDG) to produce 2-keto-3-deoxy-6-phosphogluconate (KDPG). In Dickeya dadantii (strain 3937) (Erwinia chrysanthemi (strain 3937)), this protein is 2-dehydro-3-deoxygluconokinase.